The primary structure comprises 238 residues: MGKPSSKEERVHHVFENIYSKYDSMNSIISFQRHKSWRKDTMKRMNVQAGETALDVCCGTGDWSISLSEAVGQTGKVIGLDFSKNMLSIAKQKKQDLQLNQLELVHGNAMELPYEENSFDYVTIGFGLRNVPDYMTVLEEMYRVVKPGGKVVCIETSQPTLIGYRQAYYFYFKFIMPILGKLIAKSYKEYSWLQESAKDFPGKKELKEMFLNAGFDKVEMKSYTGGVAAMHMGFKASQ.

Residues Thr60, Asp81, and 108 to 109 each bind S-adenosyl-L-methionine; that span reads NA.

The protein belongs to the class I-like SAM-binding methyltransferase superfamily. MenG/UbiE family.

It catalyses the reaction a 2-demethylmenaquinol + S-adenosyl-L-methionine = a menaquinol + S-adenosyl-L-homocysteine + H(+). It participates in quinol/quinone metabolism; menaquinone biosynthesis; menaquinol from 1,4-dihydroxy-2-naphthoate: step 2/2. Functionally, methyltransferase required for the conversion of demethylmenaquinol (DMKH2) to menaquinol (MKH2). The polypeptide is Demethylmenaquinone methyltransferase (Oceanobacillus iheyensis (strain DSM 14371 / CIP 107618 / JCM 11309 / KCTC 3954 / HTE831)).